Consider the following 374-residue polypeptide: DNA replication and repair protein RecF (374 aa).

An ATP-binding site is contributed by 30–37; sequence GPNAQGKS.

Belongs to the RecF family.

It is found in the cytoplasm. In terms of biological role, the RecF protein is involved in DNA metabolism; it is required for DNA replication and normal SOS inducibility. RecF binds preferentially to single-stranded, linear DNA. It also seems to bind ATP. This Acaryochloris marina (strain MBIC 11017) protein is DNA replication and repair protein RecF.